The sequence spans 379 residues: tRNA 2-selenouridine synthase (379 aa).

Positions 15 to 138 (FQQNIPLMDV…ARNYLIKQIE (124 aa)) constitute a Rhodanese domain. C98 acts as the S-selanylcysteine intermediate in catalysis.

Belongs to the SelU family. As to quaternary structure, monomer.

It catalyses the reaction 5-methylaminomethyl-2-thiouridine(34) in tRNA + selenophosphate + (2E)-geranyl diphosphate + H2O + H(+) = 5-methylaminomethyl-2-selenouridine(34) in tRNA + (2E)-thiogeraniol + phosphate + diphosphate. The catalysed reaction is 5-methylaminomethyl-2-thiouridine(34) in tRNA + (2E)-geranyl diphosphate = 5-methylaminomethyl-S-(2E)-geranyl-thiouridine(34) in tRNA + diphosphate. The enzyme catalyses 5-methylaminomethyl-S-(2E)-geranyl-thiouridine(34) in tRNA + selenophosphate + H(+) = 5-methylaminomethyl-2-(Se-phospho)selenouridine(34) in tRNA + (2E)-thiogeraniol. It carries out the reaction 5-methylaminomethyl-2-(Se-phospho)selenouridine(34) in tRNA + H2O = 5-methylaminomethyl-2-selenouridine(34) in tRNA + phosphate. Involved in the post-transcriptional modification of the uridine at the wobble position (U34) of tRNA(Lys), tRNA(Glu) and tRNA(Gln). Catalyzes the conversion of 2-thiouridine (S2U-RNA) to 2-selenouridine (Se2U-RNA). Acts in a two-step process involving geranylation of 2-thiouridine (S2U) to S-geranyl-2-thiouridine (geS2U) and subsequent selenation of the latter derivative to 2-selenouridine (Se2U) in the tRNA chain. The polypeptide is tRNA 2-selenouridine synthase (Bdellovibrio bacteriovorus (strain ATCC 15356 / DSM 50701 / NCIMB 9529 / HD100)).